The sequence spans 331 residues: Centriolar satellite-associated tubulin polyglutamylase complex regulator 1 (331 aa).

Positions 1–111 (MLSPERLALP…HCLLQLLCPD (111 aa)) are required for interaction with PCM1. Residues 1 to 225 (MLSPERLALP…SCPPPALVKE (225 aa)) are required for interaction with TPGS1, LRRC49, and TTLL1. Positions 112-331 (FPLELTQKAA…STEETDESET (220 aa)) are required for interaction with TPGS2. The tract at residues 292–331 (SCLPSRTPPRVGSPWKPLHRSRKLDAESDGSTEETDESET) is disordered. Residues 318–331 (ESDGSTEETDESET) are compositionally biased toward acidic residues. Ser-319 carries the post-translational modification Phosphoserine.

This sequence belongs to the CSTPP1 family. In terms of assembly, interacts with PCM1. Interacts with TTLL1, TPGS1, TPGS2 and LRRC49; the interactions link CSTPP1 to the complex TPGC. Binds to alpha-tubulin.

It localises to the cytoplasm. The protein localises to the cytoskeleton. Its subcellular location is the microtubule organizing center. It is found in the centrosome. The protein resides in the centriolar satellite. In terms of biological role, regulator of the tubulin polyglutamylase complex (TPGC) that controls cytoskeletal organization, nuclear shape, and cilium disassembly by balancing microtubule and actin assembly. Regulates the assembly and stability of the TPGC and thereby modulates polyglutamylation of the microtubule, which antagonizes MAP4 binding. The polypeptide is Centriolar satellite-associated tubulin polyglutamylase complex regulator 1 (Cstpp1) (Rattus norvegicus (Rat)).